Reading from the N-terminus, the 632-residue chain is Acyl-coenzyme A oxidase-like protein (632 aa).

376–381 (TGGMGY) lines the FAD pocket.

It belongs to the acyl-CoA oxidase family. Requires FAD as cofactor.

The sequence is that of Acyl-coenzyme A oxidase-like protein (Acoxl) from Mus musculus (Mouse).